Consider the following 337-residue polypeptide: Probable dual-specificity RNA methyltransferase RlmN (337 aa).

Glutamate 88 acts as the Proton acceptor in catalysis. The Radical SAM core domain occupies 94-322; sequence SSDRLTVCVS…ASIRRSRGLD (229 aa). The cysteines at positions 101 and 327 are disulfide-linked. Residues cysteine 108, cysteine 112, and cysteine 115 each coordinate [4Fe-4S] cluster. S-adenosyl-L-methionine contacts are provided by residues 155–156, serine 185, 208–210, and asparagine 284; these read GE and SLH. Cysteine 327 serves as the catalytic S-methylcysteine intermediate.

It belongs to the radical SAM superfamily. RlmN family. It depends on [4Fe-4S] cluster as a cofactor.

It localises to the cytoplasm. The catalysed reaction is adenosine(2503) in 23S rRNA + 2 reduced [2Fe-2S]-[ferredoxin] + 2 S-adenosyl-L-methionine = 2-methyladenosine(2503) in 23S rRNA + 5'-deoxyadenosine + L-methionine + 2 oxidized [2Fe-2S]-[ferredoxin] + S-adenosyl-L-homocysteine. It catalyses the reaction adenosine(37) in tRNA + 2 reduced [2Fe-2S]-[ferredoxin] + 2 S-adenosyl-L-methionine = 2-methyladenosine(37) in tRNA + 5'-deoxyadenosine + L-methionine + 2 oxidized [2Fe-2S]-[ferredoxin] + S-adenosyl-L-homocysteine. In terms of biological role, specifically methylates position 2 of adenine 2503 in 23S rRNA and position 2 of adenine 37 in tRNAs. The protein is Probable dual-specificity RNA methyltransferase RlmN of Thermosynechococcus vestitus (strain NIES-2133 / IAM M-273 / BP-1).